Consider the following 294-residue polypeptide: ATP synthase gamma chain (294 aa).

This sequence belongs to the ATPase gamma chain family. In terms of assembly, F-type ATPases have 2 components, CF(1) - the catalytic core - and CF(0) - the membrane proton channel. CF(1) has five subunits: alpha(3), beta(3), gamma(1), delta(1), epsilon(1). CF(0) has three main subunits: a, b and c.

The protein resides in the cell inner membrane. Its function is as follows. Produces ATP from ADP in the presence of a proton gradient across the membrane. The gamma chain is believed to be important in regulating ATPase activity and the flow of protons through the CF(0) complex. This Caulobacter sp. (strain K31) protein is ATP synthase gamma chain.